The sequence spans 212 residues: Thymidylate kinase (212 aa).

Residue 10 to 17 (GLDGAGKT) participates in ATP binding.

Belongs to the thymidylate kinase family.

The enzyme catalyses dTMP + ATP = dTDP + ADP. Its function is as follows. Phosphorylation of dTMP to form dTDP in both de novo and salvage pathways of dTTP synthesis. In Blochmanniella pennsylvanica (strain BPEN), this protein is Thymidylate kinase.